Here is a 229-residue protein sequence, read N- to C-terminus: 2-C-methyl-D-erythritol 4-phosphate cytidylyltransferase (229 aa).

This sequence belongs to the IspD/TarI cytidylyltransferase family. IspD subfamily.

The enzyme catalyses 2-C-methyl-D-erythritol 4-phosphate + CTP + H(+) = 4-CDP-2-C-methyl-D-erythritol + diphosphate. The protein operates within isoprenoid biosynthesis; isopentenyl diphosphate biosynthesis via DXP pathway; isopentenyl diphosphate from 1-deoxy-D-xylulose 5-phosphate: step 2/6. In terms of biological role, catalyzes the formation of 4-diphosphocytidyl-2-C-methyl-D-erythritol from CTP and 2-C-methyl-D-erythritol 4-phosphate (MEP). The polypeptide is 2-C-methyl-D-erythritol 4-phosphate cytidylyltransferase (Neisseria meningitidis serogroup A / serotype 4A (strain DSM 15465 / Z2491)).